The following is an 802-amino-acid chain: Peptidyl serine alpha-galactosyltransferase (802 aa).

An N-terminal signal peptide occupies residues 1-19 (MRWDLITAIVAALVVSVLA). Residues 20-750 (DESGQMAPYR…SEGRFSTLKL (731 aa)) lie on the Extracellular side of the membrane. 4 N-linked (GlcNAc...) asparagine glycosylation sites follow: N214, N275, N425, and N637. Positions 699–741 (RNCPEPGSESTEKISVSRKVGNIETKQTQGSDETKESSGSSES) are disordered. A helical transmembrane segment spans residues 751 to 771 (WVIALWLISGVGFLVVMLLVF). The Cytoplasmic segment spans residues 772–802 (STRRGRGTTRGKGYRNKRRTSYSNTGFLDTK). Positions 777–791 (RGTTRGKGYRNKRRT) are enriched in basic residues. A disordered region spans residues 777-802 (RGTTRGKGYRNKRRTSYSNTGFLDTK). The segment covering 792–802 (SYSNTGFLDTK) has biased composition (polar residues).

The protein localises to the endoplasmic reticulum membrane. Its function is as follows. Glycosyltransferase involved in the O-galactosylation of several proteins including extensins. Catalyzes the transfer of alpha-galactosyl to Ser residues. Hydroxylation of proline residues adjacent to the serine acceptor is required for activity. This chain is Peptidyl serine alpha-galactosyltransferase, found in Arabidopsis thaliana (Mouse-ear cress).